A 209-amino-acid polypeptide reads, in one-letter code: Methylthioribulose-1-phosphate dehydratase (209 aa).

Residues His98 and His100 each coordinate Zn(2+).

Belongs to the aldolase class II family. MtnB subfamily. As to quaternary structure, homotetramer. Zn(2+) serves as cofactor.

It carries out the reaction 5-(methylsulfanyl)-D-ribulose 1-phosphate = 5-methylsulfanyl-2,3-dioxopentyl phosphate + H2O. The protein operates within amino-acid biosynthesis; L-methionine biosynthesis via salvage pathway; L-methionine from S-methyl-5-thio-alpha-D-ribose 1-phosphate: step 2/6. Its function is as follows. Catalyzes the dehydration of methylthioribulose-1-phosphate (MTRu-1-P) into 2,3-diketo-5-methylthiopentyl-1-phosphate (DK-MTP-1-P). The chain is Methylthioribulose-1-phosphate dehydratase (mtnB) from Bacillus subtilis (strain 168).